The chain runs to 400 residues: Trans-enoyl reductase ucsL (400 aa).

50–53 is a binding site for NADP(+); the sequence is TDHK. 145–152 provides a ligand contact to substrate; the sequence is SVHGSVAL. Residues 204-207, 227-230, Tyr245, and 292-293 each bind NADP(+); these read STAC, SPRN, and LE. 313 to 317 contacts substrate; sequence GPVMF. NADP(+) is bound at residue 389 to 390; that stretch reads VS.

It belongs to the zinc-containing alcohol dehydrogenase family. As to quaternary structure, monomer.

The protein operates within mycotoxin biosynthesis. Its function is as follows. Trans-enoyl reductase; part of the gene cluster that mediates the biosynthesis of UCS1025A, a member of the pyrrolizidinone family that acts as a strong telomerase inhibitor and displays potent antibacterial and antitumor properties. These compounds share a hemiaminal-containing pyrrolizidinone core fused with a gamma-lactone, giving a furopyrrolizidine that is connected to a decalin fragment. The polyketide synthase module (PKS) of the PKS-NRPS ucsA is responsible for the synthesis of the polyketide backbone via the condensation of an acetyl-CoA starter unit with 6 malonyl-CoA units. The downstream nonribosomal peptide synthetase (NRPS) module then amidates the carboxyl end of the polyketide with a 2S,3S-methylproline derived from L-isoleucine by the 2-oxoglutarate-dependent dioxygenase ucsF which converts L-isoleucine to (4S,5S)-4-methylpyrroline-5-carboxylate that is further converted to 2S,3S-methylproline by the pyrroline-5-carboxylate reductase ucsG. Reductive release of the completed aminoacyl polyketide from the assembly line can form the 3-pyrrolin-2-one structure via an intramolecular Knoevenagel reaction. Because ucsA lacks a designated enoylreductase (ER) domain, the required activity is provided the enoyl reductase ucsL. This keto acyclic precursor is the substrate of the Diels-Alderase ucsH, that catalyzes the Diels-Alder cycloaddition. Oxidation of the 3S-methyl group to a carboxylate by the cytochrome P450 monooxygenase ucsK allows an oxa-Michael cyclization that might involve the reductase/dehydrogenase ucsI and which furnishes the furopyrrolizidine. The oxidase ucsJ likely plays a critical role in stereoselective reduction of the C5-C6 double bond to afford the required R-configured carboxylate group. Further enolization and oxidation at C5 by an unidentified enzyme affords the last intermediate that can undergo oxa-Michael cyclization to yield UCS1025A. The protein is Trans-enoyl reductase ucsL of Acremonium sp.